The chain runs to 433 residues: Phosphomethylpyrimidine synthase (433 aa).

Residues Asn-69, Met-98, Tyr-127, His-163, 185–187, 226–229, and Glu-265 each bind substrate; these read SRG and DALR. His-269 contributes to the Zn(2+) binding site. Tyr-292 contacts substrate. A Zn(2+)-binding site is contributed by His-333. [4Fe-4S] cluster is bound by residues Cys-409, Cys-412, and Cys-416.

The protein belongs to the ThiC family. Requires [4Fe-4S] cluster as cofactor.

The enzyme catalyses 5-amino-1-(5-phospho-beta-D-ribosyl)imidazole + S-adenosyl-L-methionine = 4-amino-2-methyl-5-(phosphooxymethyl)pyrimidine + CO + 5'-deoxyadenosine + formate + L-methionine + 3 H(+). It participates in cofactor biosynthesis; thiamine diphosphate biosynthesis. Catalyzes the synthesis of the hydroxymethylpyrimidine phosphate (HMP-P) moiety of thiamine from aminoimidazole ribotide (AIR) in a radical S-adenosyl-L-methionine (SAM)-dependent reaction. This Finegoldia magna (strain ATCC 29328 / DSM 20472 / WAL 2508) (Peptostreptococcus magnus) protein is Phosphomethylpyrimidine synthase.